A 231-amino-acid polypeptide reads, in one-letter code: ATP phosphoribosyltransferase (231 aa).

This sequence belongs to the ATP phosphoribosyltransferase family. Short subfamily. In terms of assembly, heteromultimer composed of HisG and HisZ subunits.

It is found in the cytoplasm. It catalyses the reaction 1-(5-phospho-beta-D-ribosyl)-ATP + diphosphate = 5-phospho-alpha-D-ribose 1-diphosphate + ATP. It functions in the pathway amino-acid biosynthesis; L-histidine biosynthesis; L-histidine from 5-phospho-alpha-D-ribose 1-diphosphate: step 1/9. Catalyzes the condensation of ATP and 5-phosphoribose 1-diphosphate to form N'-(5'-phosphoribosyl)-ATP (PR-ATP). Has a crucial role in the pathway because the rate of histidine biosynthesis seems to be controlled primarily by regulation of HisG enzymatic activity. The protein is ATP phosphoribosyltransferase (hisG) of Sinorhizobium fredii (strain NBRC 101917 / NGR234).